The chain runs to 225 residues: MQQLILWQLINSNFPLGAYNYSEGLEYLVESAGCSEVESFQDWLGLHLRYGSIRAEVSIVLRIVQAIASGDFNQLQYWNTWLNGTRETRELRQQSIQMGNSLLKLLGDLDENKRPQLGACREQIGKSCHYAIAFGIAIALWDIESHQAVLGYLHSWLSNLVSAGVKLIPLGQTQGQRIIYQLQPLIIETVETVVTQKEMDLYACTWGLSLASMNHETQYTRLFRS.

Belongs to the UreF family. As to quaternary structure, ureD, UreF and UreG form a complex that acts as a GTP-hydrolysis-dependent molecular chaperone, activating the urease apoprotein by helping to assemble the nickel containing metallocenter of UreC. The UreE protein probably delivers the nickel.

The protein resides in the cytoplasm. In terms of biological role, required for maturation of urease via the functional incorporation of the urease nickel metallocenter. The protein is Urease accessory protein UreF of Picosynechococcus sp. (strain ATCC 27264 / PCC 7002 / PR-6) (Agmenellum quadruplicatum).